The chain runs to 638 residues: 1-deoxy-D-xylulose-5-phosphate synthase (638 aa).

Residues histidine 79 and 120–122 (GHS) each bind thiamine diphosphate. Residue aspartate 151 participates in Mg(2+) binding. Residues 152 to 153 (GA), asparagine 182, tyrosine 291, and glutamate 373 contribute to the thiamine diphosphate site. Asparagine 182 lines the Mg(2+) pocket.

It belongs to the transketolase family. DXPS subfamily. Homodimer. The cofactor is Mg(2+). It depends on thiamine diphosphate as a cofactor.

The enzyme catalyses D-glyceraldehyde 3-phosphate + pyruvate + H(+) = 1-deoxy-D-xylulose 5-phosphate + CO2. Its pathway is metabolic intermediate biosynthesis; 1-deoxy-D-xylulose 5-phosphate biosynthesis; 1-deoxy-D-xylulose 5-phosphate from D-glyceraldehyde 3-phosphate and pyruvate: step 1/1. Functionally, catalyzes the acyloin condensation reaction between C atoms 2 and 3 of pyruvate and glyceraldehyde 3-phosphate to yield 1-deoxy-D-xylulose-5-phosphate (DXP). The protein is 1-deoxy-D-xylulose-5-phosphate synthase of Xanthomonas euvesicatoria pv. vesicatoria (strain 85-10) (Xanthomonas campestris pv. vesicatoria).